The following is a 289-amino-acid chain: Rhodopsin (289 aa).

Residues 1–7 are Extracellular-facing; the sequence is YLVNPAA. The chain crosses the membrane as a helical span at residues 8–32; the sequence is YAALGAYMFLLILIGFPINFLTLYV. At 33–44 the chain is on the cytoplasmic side; that stretch reads TLEHKKLRTPLN. Residues 45–67 traverse the membrane as a helical segment; that stretch reads YILLNLAVANLFMVLGGFTTTMY. At 68–81 the chain is on the extracellular side; the sequence is TSMHGYFVLGRLGC. Cysteine 81 and cysteine 158 are joined by a disulfide. Residues 82–104 traverse the membrane as a helical segment; sequence NLEAFFATLGGEIALWSLVVLAI. A 'Ionic lock' involved in activated form stabilization motif is present at residues 105–107; sequence ERW. Topologically, residues 105 to 123 are cytoplasmic; that stretch reads ERWIVVCKPISNFRFTEDH. Residues 124–144 traverse the membrane as a helical segment; the sequence is AIMGLAFTWVMALACAVPPLV. Residues 145–173 are Extracellular-facing; sequence GWSRYIPEGMQCSCGVDYYTRAEGFNNES. Asparagine 171 carries N-linked (GlcNAc...) asparagine glycosylation. A helical membrane pass occupies residues 174–195; that stretch reads FVIYMFIVHFLIPLSVIFFCYG. Residues 196–223 lie on the Cytoplasmic side of the membrane; that stretch reads RLLCAVKEAPAAQQESETTQRAEKEVSR. A helical membrane pass occupies residues 224–245; it reads MVVIMVIGFLVCWLPYASVAWW. Topologically, residues 246-257 are extracellular; that stretch reads IFCNQGSDFGPI. Residues 258–279 form a helical membrane-spanning segment; it reads FMTLPSFFAKSAAIYNPMIYIC. N6-(retinylidene)lysine is present on lysine 267. At 280-289 the chain is on the cytoplasmic side; that stretch reads MNKQFRHCMI.

This sequence belongs to the G-protein coupled receptor 1 family. Opsin subfamily. Phosphorylated on some or all of the serine and threonine residues present in the C-terminal region. Post-translationally, contains one covalently linked retinal chromophore.

It is found in the membrane. It localises to the cell projection. The protein resides in the cilium. The protein localises to the photoreceptor outer segment. In terms of biological role, photoreceptor required for image-forming vision at low light intensity. While most salt water fish species use retinal as chromophore, most freshwater fish use 3-dehydroretinal, or a mixture of retinal and 3-dehydroretinal. Light-induced isomerization of 11-cis to all-trans retinal triggers a conformational change that activates signaling via G-proteins. Subsequent receptor phosphorylation mediates displacement of the bound G-protein alpha subunit by arrestin and terminates signaling. The sequence is that of Rhodopsin (rho) from Abyssocottus korotneffi (Baikalian deep-water sculpin).